The sequence spans 21 residues: Peptide PGLa-R3 (21 aa).

At Leu21 the chain carries Leucine amide.

Expressed by the skin glands.

The protein localises to the secreted. Functionally, antimicrobial peptide. The chain is Peptide PGLa-R3 from Xenopus ruwenzoriensis (Uganda clawed frog).